Consider the following 172-residue polypeptide: RNA pyrophosphohydrolase (172 aa).

Residues 6–149 form the Nudix hydrolase domain; the sequence is GYRLNVGIVI…KRDVYRRAMK (144 aa). Positions 38–59 match the Nudix box motif; sequence GGIDEGETPEQAMYRELYEEVG.

The protein belongs to the Nudix hydrolase family. RppH subfamily. Requires a divalent metal cation as cofactor.

Accelerates the degradation of transcripts by removing pyrophosphate from the 5'-end of triphosphorylated RNA, leading to a more labile monophosphorylated state that can stimulate subsequent ribonuclease cleavage. The sequence is that of RNA pyrophosphohydrolase from Vibrio atlanticus (strain LGP32) (Vibrio splendidus (strain Mel32)).